Here is a 465-residue protein sequence, read N- to C-terminus: Deoxyguanosinetriphosphate triphosphohydrolase-like protein (465 aa).

Positions 1–22 are disordered; that stretch reads MKWDKLLNDKRRRESGVTRSKN. The HD domain maps to 63–252; the sequence is RLTHSMEVST…LEVADDIAYL (190 aa).

It belongs to the dGTPase family. Type 3 subfamily.

The chain is Deoxyguanosinetriphosphate triphosphohydrolase-like protein from Listeria innocua serovar 6a (strain ATCC BAA-680 / CLIP 11262).